Reading from the N-terminus, the 372-residue chain is Glutamine synthetase (372 aa).

The region spanning 24-103 (VIAEYVWVDG…VLAECFNSDG (80 aa)) is the GS beta-grasp domain. In terms of domain architecture, GS catalytic spans 110 to 372 (HRHEANKLFQ…KEYERETNEQ (263 aa)).

The protein belongs to the glutamine synthetase family. In terms of assembly, homooctamer.

The protein resides in the cytoplasm. The enzyme catalyses L-glutamate + NH4(+) + ATP = L-glutamine + ADP + phosphate + H(+). In Candida glabrata (strain ATCC 2001 / BCRC 20586 / JCM 3761 / NBRC 0622 / NRRL Y-65 / CBS 138) (Yeast), this protein is Glutamine synthetase (GLN1).